A 423-amino-acid chain; its full sequence is Adenylosuccinate synthetase (423 aa).

GTP contacts are provided by residues 12 to 18 and 40 to 42; these read GDEGKGK and GHT. The active-site Proton acceptor is aspartate 13. 2 residues coordinate Mg(2+): aspartate 13 and glycine 40. IMP contacts are provided by residues 13–16, 38–41, threonine 128, arginine 142, glutamine 223, threonine 238, and arginine 302; these read DEGK and NAGH. The active-site Proton donor is the histidine 41. Position 298 to 304 (298 to 304) interacts with substrate; it reads TTTGRPR. GTP-binding positions include arginine 304, 330-332, and 412-414; these read RLD and CIG.

Belongs to the adenylosuccinate synthetase family. Homodimer. Mg(2+) is required as a cofactor.

It is found in the cytoplasm. The enzyme catalyses IMP + L-aspartate + GTP = N(6)-(1,2-dicarboxyethyl)-AMP + GDP + phosphate + 2 H(+). It functions in the pathway purine metabolism; AMP biosynthesis via de novo pathway; AMP from IMP: step 1/2. In terms of biological role, plays an important role in the de novo pathway of purine nucleotide biosynthesis. Catalyzes the first committed step in the biosynthesis of AMP from IMP. This chain is Adenylosuccinate synthetase, found in Dehalococcoides mccartyi (strain ATCC BAA-2100 / JCM 16839 / KCTC 5957 / BAV1).